A 152-amino-acid polypeptide reads, in one-letter code: Protein SprT-like (152 aa).

The SprT-like domain occupies 7–147 (QRLVEEVSLQ…CGKCKGKLKP (141 aa)). His67 provides a ligand contact to Zn(2+). Glu68 is an active-site residue. His71 is a Zn(2+) binding site.

Belongs to the SprT family. Zn(2+) serves as cofactor.

It is found in the cytoplasm. The protein is Protein SprT-like of Bacillus cereus (strain B4264).